The following is a 108-amino-acid chain: MAEAWRYSAQGVAVAVRVTPRGDRDEIDGLETLSDGRPVVKLRVRAIADGGEANRAVIELLAKALGVPKRNVRLLSGATSRQKQIAIDGDPKSLGETLRQLTAAKPAG.

The protein belongs to the UPF0235 family.

The polypeptide is UPF0235 protein RPB_0109 (Rhodopseudomonas palustris (strain HaA2)).